A 509-amino-acid chain; its full sequence is Putative cytochrome P450 CYP13A8 (509 aa).

C455 is a binding site for heme.

This sequence belongs to the cytochrome P450 family. Heme serves as cofactor.

Its function is as follows. Cytochromes P450 are a group of heme-thiolate monooxygenases. They oxidize a variety of structurally unrelated compounds, including steroids, fatty acids, and xenobiotics. The protein is Putative cytochrome P450 CYP13A8 (cyp-13A8) of Caenorhabditis elegans.